The following is a 348-amino-acid chain: Dihydroorotase (348 aa).

Zn(2+) is bound by residues His-14 and His-16. Substrate contacts are provided by residues 16–18 (HLR) and Asn-42. The Zn(2+) site is built by Lys-100, His-137, and His-175. Lys-100 carries the N6-carboxylysine modification. His-137 is a substrate binding site. Leu-220 is a substrate binding site. Residue Asp-248 participates in Zn(2+) binding. Asp-248 is an active-site residue. Residues His-252 and Ala-264 each contribute to the substrate site.

This sequence belongs to the metallo-dependent hydrolases superfamily. DHOase family. Class II DHOase subfamily. As to quaternary structure, homodimer. Zn(2+) is required as a cofactor.

It catalyses the reaction (S)-dihydroorotate + H2O = N-carbamoyl-L-aspartate + H(+). It participates in pyrimidine metabolism; UMP biosynthesis via de novo pathway; (S)-dihydroorotate from bicarbonate: step 3/3. In terms of biological role, catalyzes the reversible cyclization of carbamoyl aspartate to dihydroorotate. The chain is Dihydroorotase from Pseudomonas fluorescens (strain ATCC BAA-477 / NRRL B-23932 / Pf-5).